We begin with the raw amino-acid sequence, 240 residues long: Adenosylcobinamide-GDP ribazoletransferase (240 aa).

Helical transmembrane passes span 31 to 51, 62 to 81, 109 to 129, 133 to 153, and 179 to 199; these read LLYY…ASHL, ALLL…DGLA, IAVV…WVLV, IGAQ…GLFL, and VLLV…LLAL.

It belongs to the CobS family. The cofactor is Mg(2+).

Its subcellular location is the cell inner membrane. The enzyme catalyses alpha-ribazole + adenosylcob(III)inamide-GDP = adenosylcob(III)alamin + GMP + H(+). The catalysed reaction is alpha-ribazole 5'-phosphate + adenosylcob(III)inamide-GDP = adenosylcob(III)alamin 5'-phosphate + GMP + H(+). It participates in cofactor biosynthesis; adenosylcobalamin biosynthesis; adenosylcobalamin from cob(II)yrinate a,c-diamide: step 7/7. In terms of biological role, joins adenosylcobinamide-GDP and alpha-ribazole to generate adenosylcobalamin (Ado-cobalamin). Also synthesizes adenosylcobalamin 5'-phosphate from adenosylcobinamide-GDP and alpha-ribazole 5'-phosphate. This chain is Adenosylcobinamide-GDP ribazoletransferase, found in Pseudomonas putida (strain ATCC 47054 / DSM 6125 / CFBP 8728 / NCIMB 11950 / KT2440).